The chain runs to 417 residues: MSGLPEHLRRPPRGMRDWLPPQLYALIEMEERLSKVAESFGYRRVETPVVEHFEVLAKKAGQEVVNEIYYFKDKAGRDVGLRFDMTVPVARVISYNLDLPRPVRWYYFTKVFRYDEPQHGRYREFHQFGIELVGSASPRADAEVIQVFIEALEAAGARDYVVKINDRRAVDKLLESLGVLQHRDVIYRALDKKYKLPREQVVDIMTNGGVPIDKAERIYDASEEMTLEEAVDAVLRLDAGLGSFYQKLVGYLATAVPVDRLRFDMSIVRGLDYYTGVVFEAYVGKYRLAVGGGGRYDDLLELYSGVKMPALGFAIGVERLMEAVGLERVEKPLDYYIYIFDDGAYPHAVALAKKLRAAGHSVAIELGEKNLKDAFEYILKVGTKYLIIMGRRELERGVVKIRDLQRREEFEKPLAEF.

It belongs to the class-II aminoacyl-tRNA synthetase family.

The protein resides in the cytoplasm. The catalysed reaction is tRNA(His) + L-histidine + ATP = L-histidyl-tRNA(His) + AMP + diphosphate + H(+). The protein is Histidine--tRNA ligase of Pyrobaculum neutrophilum (strain DSM 2338 / JCM 9278 / NBRC 100436 / V24Sta) (Thermoproteus neutrophilus).